We begin with the raw amino-acid sequence, 278 residues long: 3-methyl-2-oxobutanoate hydroxymethyltransferase (278 aa).

Residues aspartate 43 and aspartate 82 each coordinate Mg(2+). 3-methyl-2-oxobutanoate contacts are provided by residues 43–44 (DS), aspartate 82, and lysine 112. Glutamate 114 provides a ligand contact to Mg(2+). The active-site Proton acceptor is glutamate 181.

Belongs to the PanB family. As to quaternary structure, homodecamer; pentamer of dimers. The cofactor is Mg(2+).

The protein localises to the cytoplasm. It carries out the reaction 3-methyl-2-oxobutanoate + (6R)-5,10-methylene-5,6,7,8-tetrahydrofolate + H2O = 2-dehydropantoate + (6S)-5,6,7,8-tetrahydrofolate. Its pathway is cofactor biosynthesis; (R)-pantothenate biosynthesis; (R)-pantoate from 3-methyl-2-oxobutanoate: step 1/2. In terms of biological role, catalyzes the reversible reaction in which hydroxymethyl group from 5,10-methylenetetrahydrofolate is transferred onto alpha-ketoisovalerate to form ketopantoate. The sequence is that of 3-methyl-2-oxobutanoate hydroxymethyltransferase from Bacillus cereus (strain G9842).